The primary structure comprises 249 residues: Sodium channel modifier 1 (249 aa).

The Bipartite nuclear localization signal signature appears at 4–20; sequence KREGDDQSQLNILKKRR. Residues 42-74 form a Matrin-type zinc finger; the sequence is YSCLVCSHRPVFDTVDMLVVHRKGKRHLEGMKW. Over residues 94–103 the composition is skewed to basic and acidic residues; that stretch reads YVKAEDDRQE. 3 disordered regions span residues 94–116, 128–199, and 228–249; these read YVKA…QTRK, YSSC…PLTE, and ENVE…SESS. A compositionally biased stretch (polar residues) spans 104-115; it reads PSSSAPLLTQTR. A compositionally biased stretch (basic and acidic residues) spans 134–149; it reads KASERSESSSKEHRND. Over residues 150–170 the composition is skewed to polar residues; the sequence is LANSHLSMRTESNDSRTTVHQ. Acidic residues predominate over residues 230-239; the sequence is VEFDSDEEEP.

As to quaternary structure, component of the minor spliceosome, which splices U12-type introns.

It is found in the nucleus. The protein localises to the nucleoplasm. The protein resides in the nucleus speckle. In terms of biological role, as a component of the minor spliceosome, involved in the splicing of U12-type introns in pre-mRNAs. In Danio rerio (Zebrafish), this protein is Sodium channel modifier 1 (scnm1).